A 249-amino-acid polypeptide reads, in one-letter code: MSGHSKWATTKHKKAVIDAKRGKMFAKLIKNVEVAARTGGGDPAGNPTLYDAIQKAKKNSVPNDNIDRAVKRGSGLESGGADYQTVMYEGYGPNGVALLIECLTDNRNRAATEVRTALTRNGGSFADAGSVSYLFSRKGVVIVAKAGTTEDDVMLAVLDAGAEEVNDLGEAFEVLSEPGDLVAVRTALQDAGIEYESAESSLVPSVSVPVDEEGARKILKLIDVLEDCDDVQNVFANFDASDELLAKLG.

This sequence belongs to the TACO1 family.

The protein localises to the cytoplasm. The sequence is that of Probable transcriptional regulatory protein Strop_1792 from Salinispora tropica (strain ATCC BAA-916 / DSM 44818 / JCM 13857 / NBRC 105044 / CNB-440).